Here is a 248-residue protein sequence, read N- to C-terminus: Pyridoxine 5'-phosphate synthase (248 aa).

N10 serves as a coordination point for 3-amino-2-oxopropyl phosphate. 1-deoxy-D-xylulose 5-phosphate is bound at residue 12-13; it reads DH. R21 provides a ligand contact to 3-amino-2-oxopropyl phosphate. Residue H46 is the Proton acceptor of the active site. Positions 48 and 53 each coordinate 1-deoxy-D-xylulose 5-phosphate. Catalysis depends on E73, which acts as the Proton acceptor. T103 is a 1-deoxy-D-xylulose 5-phosphate binding site. H194 serves as the catalytic Proton donor. Residues G195 and 216-217 contribute to the 3-amino-2-oxopropyl phosphate site; that span reads GH.

It belongs to the PNP synthase family. Homooctamer; tetramer of dimers.

Its subcellular location is the cytoplasm. The catalysed reaction is 3-amino-2-oxopropyl phosphate + 1-deoxy-D-xylulose 5-phosphate = pyridoxine 5'-phosphate + phosphate + 2 H2O + H(+). Its pathway is cofactor biosynthesis; pyridoxine 5'-phosphate biosynthesis; pyridoxine 5'-phosphate from D-erythrose 4-phosphate: step 5/5. Catalyzes the complicated ring closure reaction between the two acyclic compounds 1-deoxy-D-xylulose-5-phosphate (DXP) and 3-amino-2-oxopropyl phosphate (1-amino-acetone-3-phosphate or AAP) to form pyridoxine 5'-phosphate (PNP) and inorganic phosphate. This Legionella pneumophila (strain Paris) protein is Pyridoxine 5'-phosphate synthase.